The primary structure comprises 541 residues: Chaperonin GroEL 1 (541 aa).

ATP is bound by residues 29–32, 86–90, Gly413, 479–481, and Asp495; these read TLGP, DGTTT, and NAA.

The protein belongs to the chaperonin (HSP60) family. As to quaternary structure, forms a cylinder of 14 subunits composed of two heptameric rings stacked back-to-back. Interacts with the co-chaperonin GroES.

The protein localises to the cytoplasm. It carries out the reaction ATP + H2O + a folded polypeptide = ADP + phosphate + an unfolded polypeptide.. Its function is as follows. Together with its co-chaperonin GroES, plays an essential role in assisting protein folding. The GroEL-GroES system forms a nano-cage that allows encapsulation of the non-native substrate proteins and provides a physical environment optimized to promote and accelerate protein folding. This chain is Chaperonin GroEL 1, found in Synechocystis sp. (strain ATCC 27184 / PCC 6803 / Kazusa).